The chain runs to 126 residues: MPTINQLVRKGREKVAVKSSAPALKGCPQKRGVCTRVYTTTPKKPNSALRKVARVRLTNGIEVTAYIGGIGHNLQEHSVVLVRGGRVKDLPGVRYHIVRGALDCAGVQNRNQGRSKYGTKRPKAKK.

A 3-methylthioaspartic acid modification is found at Asp-89.

It belongs to the universal ribosomal protein uS12 family. Part of the 30S ribosomal subunit. Contacts proteins S8 and S17. May interact with IF1 in the 30S initiation complex.

With S4 and S5 plays an important role in translational accuracy. Functionally, interacts with and stabilizes bases of the 16S rRNA that are involved in tRNA selection in the A site and with the mRNA backbone. Located at the interface of the 30S and 50S subunits, it traverses the body of the 30S subunit contacting proteins on the other side and probably holding the rRNA structure together. The combined cluster of proteins S8, S12 and S17 appears to hold together the shoulder and platform of the 30S subunit. The chain is Small ribosomal subunit protein uS12 from Carboxydothermus hydrogenoformans (strain ATCC BAA-161 / DSM 6008 / Z-2901).